The chain runs to 352 residues: MPKIAVLPGDGIGQEIIPQAVRVLKAVLAETDAEFEFQDYPIGGAAIELVGKALPDETLQGCREADAVLLGAVGGHQWDHLPASERPETAALLGLRKGLNFYANIRPVRMIPSLLATSTLKENVLDGVDMVVIRELTGGVYFGEKGRSDNPRSAYDKMTYSEEEIRRILIQGFETAMLRSKKLCSVDKANVLETSRLWREIANELAKEYPEVELTHMYVDNAAMQLVRNPKQFDVIVTENMFGDILTDLASMLGGSIGMLSSASLSGTQGMYEPAHGSAPDIAGKNLANPLATILSAALMLRYSFGMEAEALRIESAVEKVLEQGYRTGDLAQAGDKVVGTIEMGDAVLAAL.

Residues Arg96, Arg106, Arg134, and Asp220 each coordinate substrate. Mg(2+) contacts are provided by Asp220, Asp244, and Asp248. Residue 277 to 289 (GSAPDIAGKNLAN) participates in NAD(+) binding.

It belongs to the isocitrate and isopropylmalate dehydrogenases family. LeuB type 1 subfamily. In terms of assembly, homodimer. It depends on Mg(2+) as a cofactor. Mn(2+) serves as cofactor.

The protein resides in the cytoplasm. The enzyme catalyses (2R,3S)-3-isopropylmalate + NAD(+) = 4-methyl-2-oxopentanoate + CO2 + NADH. Its pathway is amino-acid biosynthesis; L-leucine biosynthesis; L-leucine from 3-methyl-2-oxobutanoate: step 3/4. Its function is as follows. Catalyzes the oxidation of 3-carboxy-2-hydroxy-4-methylpentanoate (3-isopropylmalate) to 3-carboxy-4-methyl-2-oxopentanoate. The product decarboxylates to 4-methyl-2 oxopentanoate. This is 3-isopropylmalate dehydrogenase from Desulfitobacterium hafniense (strain Y51).